Here is a 439-residue protein sequence, read N- to C-terminus: Nitroalkane oxidase (439 aa).

Residues 131 to 134 (LMHS), 139 to 141 (TAN), 169 to 171 (WPS), Arg-304, 313 to 314 (HQ), 375 to 379 (KAVGM), and 400 to 404 (LFDGG) contribute to the FAD site. The Proton acceptor role is filled by Asp-402.

This sequence belongs to the acyl-CoA dehydrogenase family. As to quaternary structure, homotetramer. It depends on FAD as a cofactor.

The enzyme catalyses a primary nitroalkane + O2 + H2O = an aldehyde + nitrite + H2O2 + H(+). The catalysed reaction is a secondary nitroalkane + O2 + H2O = a ketone + nitrite + H2O2 + H(+). Strongly inhibited by mercury chloride and KCN. Functionally, catalyzes the oxidative denitrification of neutral nitroalkanes, including 3-nitro-2-pentanol, 1-nitropropane, 2-nitropropane, nitroethane and nitrocyclohexane, and may thereby protect the organism against toxic compounds. Has no detectable acyl-CoA dehydrogenase activity. The sequence is that of Nitroalkane oxidase from Fusarium oxysporum (Fusarium vascular wilt).